Reading from the N-terminus, the 239-residue chain is Ribonuclease 3 (239 aa).

In terms of domain architecture, RNase III spans 12-137 (RAKLESLIGH…LIAAIYLDGG (126 aa)). Residue E50 coordinates Mg(2+). Residue D54 is part of the active site. Positions 123 and 126 each coordinate Mg(2+). Residue E126 is part of the active site. The 70-residue stretch at 162 to 231 (DAKTELQEWS…ATKMLEREGI (70 aa)) folds into the DRBM domain.

The protein belongs to the ribonuclease III family. In terms of assembly, homodimer. Mg(2+) serves as cofactor.

It is found in the cytoplasm. The enzyme catalyses Endonucleolytic cleavage to 5'-phosphomonoester.. Its function is as follows. Digests double-stranded RNA. Involved in the processing of primary rRNA transcript to yield the immediate precursors to the large and small rRNAs (23S and 16S). Processes some mRNAs, and tRNAs when they are encoded in the rRNA operon. Processes pre-crRNA and tracrRNA of type II CRISPR loci if present in the organism. The sequence is that of Ribonuclease 3 from Rhizobium etli (strain CIAT 652).